The chain runs to 806 residues: Glycerol-3-phosphate acyltransferase (806 aa).

The short motif at 305–310 is the HXXXXD motif element; sequence CHRSHM.

Belongs to the GPAT/DAPAT family.

The protein resides in the cell inner membrane. The enzyme catalyses sn-glycerol 3-phosphate + an acyl-CoA = a 1-acyl-sn-glycero-3-phosphate + CoA. Its pathway is phospholipid metabolism; CDP-diacylglycerol biosynthesis; CDP-diacylglycerol from sn-glycerol 3-phosphate: step 1/3. The chain is Glycerol-3-phosphate acyltransferase from Enterobacter sp. (strain 638).